A 503-amino-acid chain; its full sequence is Maturase K (503 aa).

Belongs to the intron maturase 2 family. MatK subfamily.

The protein resides in the plastid. It localises to the chloroplast. Functionally, usually encoded in the trnK tRNA gene intron. Probably assists in splicing its own and other chloroplast group II introns. The sequence is that of Maturase K from Lathyrus vestitus (Pacific pea).